The following is a 907-amino-acid chain: Envelope glycoprotein B (907 aa).

Residues 1–22 (MESRIWCLVVCVNLCIVCLGAA) form the signal peptide. The Virion surface segment spans residues 23–751 (VSSSSTRGTS…EGVATFLKNP (729 aa)). The segment at 29–62 (RGTSATHSHHSSHTTSAAHSRSGSVSQRVTSSQT) is disordered. Residues 41–62 (HTTSAAHSRSGSVSQRVTSSQT) show a composition bias toward low complexity. Residues Asn-68, Asn-73, and Asn-85 are each glycosylated (N-linked (GlcNAc...) asparagine; by host). 4 disulfide bridges follow: Cys-94/Cys-551, Cys-111/Cys-507, Cys-185/Cys-250, and Cys-344/Cys-391. The interval 152–158 (SYAYIHT) is involved in fusion and/or binding to host membrane. Asn-208 carries N-linked (GlcNAc...) asparagine; by host glycosylation. The interval 237 to 244 (GSTWLYRE) is involved in fusion and/or binding to host membrane. N-linked (GlcNAc...) asparagine; by host glycans are attached at residues Asn-281, Asn-286, Asn-302, Asn-341, Asn-383, Asn-405, Asn-409, Asn-417, Asn-447, Asn-452, Asn-456, Asn-466, Asn-555, and Asn-586. A disulfide bridge links Cys-574 with Cys-611. Hydrophobic membrane proximal region stretches follow at residues 697-749 (VEDK…TFLK) and 708-748 (YLKG…ATFL). The helical transmembrane segment at 752–772 (FGAFTIILVAIAVVIIIYLIY) threads the bilayer. Residues 773–907 (TRQRRLCMQP…LKDSDEEENV (135 aa)) are Intravirion-facing. Composition is skewed to polar residues over residues 798 to 810 (VTSG…SLQA) and 860 to 877 (RAQQ…GTQD). 2 disordered regions span residues 798–838 (VTSG…TAAP) and 860–907 (RAQQ…EENV). The segment covering 878-887 (KGQKPNLLDR) has biased composition (basic and acidic residues). Positions 895–898 (YRHL) match the Internalization motif motif.

The protein belongs to the herpesviridae glycoprotein B family. Homotrimer; disulfide-linked. Binds to heparan sulfate proteoglycans. Interacts with gH/gL heterodimer. Interacts with host C-type lectin CD209/DC-SIGN. Interacts with host ITGB1, EGFR, and PDGFRA. In terms of processing, a proteolytic cleavage by host furin generates two subunits that remain linked by disulfide bonds.

The protein resides in the virion membrane. It is found in the host cell membrane. It localises to the host endosome membrane. Its subcellular location is the host Golgi apparatus membrane. In terms of biological role, envelope glycoprotein that plays a role in host cell entry, cell to-cell virus transmission, and fusion of infected cells. May be involved in the initial attachment via binding to heparan sulfate together with the gM/gN complex that binds heparin with higher affinity. Interacts with host integrin ITGB1, PDGFRA and EGFR that likely serve as postattachment entry receptors. Also participates in the fusion of viral and cellular membranes leading to virus entry into the host cell. Membrane fusion is mediated by the fusion machinery composed at least of gB and the heterodimer gH/gL. The chain is Envelope glycoprotein B from Homo sapiens (Human).